The primary structure comprises 484 residues: Cobyric acid synthase (484 aa).

One can recognise a GATase cobBQ-type domain in the interval 251–438; that stretch reads ALKIAVPVLP…LHGLFASDAY (188 aa). The active-site Nucleophile is the Cys333. Residue His430 is part of the active site.

It belongs to the CobB/CobQ family. CobQ subfamily.

The protein operates within cofactor biosynthesis; adenosylcobalamin biosynthesis. Catalyzes amidations at positions B, D, E, and G on adenosylcobyrinic A,C-diamide. NH(2) groups are provided by glutamine, and one molecule of ATP is hydrogenolyzed for each amidation. The polypeptide is Cobyric acid synthase (Rhizobium etli (strain CIAT 652)).